The following is a 65-amino-acid chain: Photosystem II reaction center protein J (65 aa).

Residues 1–18 are compositionally biased toward basic and acidic residues; sequence MSSKLKGPDGRLPDRLPD. The segment at 1 to 21 is disordered; the sequence is MSSKLKGPDGRLPDRLPDGRP. Residues 36–56 form a helical membrane-spanning segment; it reads LWLVATAGGIAVIFVLGIFFY.

This sequence belongs to the PsbJ family. In terms of assembly, PSII is composed of 1 copy each of membrane proteins PsbA, PsbB, PsbC, PsbD, PsbE, PsbF, PsbH, PsbI, PsbJ, PsbK, PsbL, PsbM, PsbT, PsbX, PsbY, Psb30/Ycf12, peripheral proteins PsbO, CyanoQ (PsbQ), PsbU, PsbV and a large number of cofactors. It forms dimeric complexes.

Its subcellular location is the cellular thylakoid membrane. One of the components of the core complex of photosystem II (PSII). PSII is a light-driven water:plastoquinone oxidoreductase that uses light energy to abstract electrons from H(2)O, generating O(2) and a proton gradient subsequently used for ATP formation. It consists of a core antenna complex that captures photons, and an electron transfer chain that converts photonic excitation into a charge separation. The sequence is that of Photosystem II reaction center protein J from Prochlorococcus marinus (strain SARG / CCMP1375 / SS120).